The primary structure comprises 500 residues: L-arabinose isomerase (500 aa).

Residues glutamate 306, glutamate 333, histidine 350, and histidine 450 each contribute to the Mn(2+) site.

This sequence belongs to the arabinose isomerase family. As to quaternary structure, homohexamer. Mn(2+) is required as a cofactor.

The catalysed reaction is beta-L-arabinopyranose = L-ribulose. The protein operates within carbohydrate degradation; L-arabinose degradation via L-ribulose; D-xylulose 5-phosphate from L-arabinose (bacterial route): step 1/3. In terms of biological role, catalyzes the conversion of L-arabinose to L-ribulose. The polypeptide is L-arabinose isomerase (Escherichia coli O6:H1 (strain CFT073 / ATCC 700928 / UPEC)).